Reading from the N-terminus, the 670-residue chain is DNA ligase (670 aa).

Residues 32-36 (DAEYD), 81-82 (SL), and Glu-111 each bind NAD(+). Residue Lys-113 is the N6-AMP-lysine intermediate of the active site. The NAD(+) site is built by Arg-134, Glu-171, Lys-290, and Lys-314. Residues Cys-408, Cys-411, Cys-426, and Cys-432 each coordinate Zn(2+). The BRCT domain occupies 591–670 (EEALSLKGQT…DGLLAVLAGE (80 aa)).

This sequence belongs to the NAD-dependent DNA ligase family. LigA subfamily. Mg(2+) is required as a cofactor. It depends on Mn(2+) as a cofactor.

The enzyme catalyses NAD(+) + (deoxyribonucleotide)n-3'-hydroxyl + 5'-phospho-(deoxyribonucleotide)m = (deoxyribonucleotide)n+m + AMP + beta-nicotinamide D-nucleotide.. DNA ligase that catalyzes the formation of phosphodiester linkages between 5'-phosphoryl and 3'-hydroxyl groups in double-stranded DNA using NAD as a coenzyme and as the energy source for the reaction. It is essential for DNA replication and repair of damaged DNA. This Shewanella sediminis (strain HAW-EB3) protein is DNA ligase.